Consider the following 28-residue polypeptide: leu operon leader peptide (28 aa).

Its function is as follows. Involved in control of the biosynthesis of leucine. The sequence is that of leu operon leader peptide (leuL) from Salmonella typhimurium (strain LT2 / SGSC1412 / ATCC 700720).